The chain runs to 172 residues: Major exported protein (172 aa).

The protein belongs to the hcp1 family.

The protein resides in the secreted. This chain is Major exported protein (hcpA), found in Pseudomonas aeruginosa (strain ATCC 15692 / DSM 22644 / CIP 104116 / JCM 14847 / LMG 12228 / 1C / PRS 101 / PAO1).